The chain runs to 316 residues: 4-hydroxy-3-methylbut-2-enyl diphosphate reductase (316 aa).

Cysteine 12 is a [4Fe-4S] cluster binding site. Residues histidine 41 and histidine 74 each coordinate (2E)-4-hydroxy-3-methylbut-2-enyl diphosphate. Dimethylallyl diphosphate contacts are provided by histidine 41 and histidine 74. Residues histidine 41 and histidine 74 each contribute to the isopentenyl diphosphate site. Residue cysteine 96 coordinates [4Fe-4S] cluster. Histidine 124 is a binding site for (2E)-4-hydroxy-3-methylbut-2-enyl diphosphate. Histidine 124 contacts dimethylallyl diphosphate. Histidine 124 is a binding site for isopentenyl diphosphate. The active-site Proton donor is glutamate 126. Threonine 169 is a binding site for (2E)-4-hydroxy-3-methylbut-2-enyl diphosphate. Cysteine 199 provides a ligand contact to [4Fe-4S] cluster. The (2E)-4-hydroxy-3-methylbut-2-enyl diphosphate site is built by serine 227, serine 228, asparagine 229, and serine 271. Dimethylallyl diphosphate contacts are provided by serine 227, serine 228, asparagine 229, and serine 271. Isopentenyl diphosphate contacts are provided by serine 227, serine 228, asparagine 229, and serine 271.

The protein belongs to the IspH family. The cofactor is [4Fe-4S] cluster.

It catalyses the reaction isopentenyl diphosphate + 2 oxidized [2Fe-2S]-[ferredoxin] + H2O = (2E)-4-hydroxy-3-methylbut-2-enyl diphosphate + 2 reduced [2Fe-2S]-[ferredoxin] + 2 H(+). The enzyme catalyses dimethylallyl diphosphate + 2 oxidized [2Fe-2S]-[ferredoxin] + H2O = (2E)-4-hydroxy-3-methylbut-2-enyl diphosphate + 2 reduced [2Fe-2S]-[ferredoxin] + 2 H(+). The protein operates within isoprenoid biosynthesis; dimethylallyl diphosphate biosynthesis; dimethylallyl diphosphate from (2E)-4-hydroxy-3-methylbutenyl diphosphate: step 1/1. It participates in isoprenoid biosynthesis; isopentenyl diphosphate biosynthesis via DXP pathway; isopentenyl diphosphate from 1-deoxy-D-xylulose 5-phosphate: step 6/6. Functionally, catalyzes the conversion of 1-hydroxy-2-methyl-2-(E)-butenyl 4-diphosphate (HMBPP) into a mixture of isopentenyl diphosphate (IPP) and dimethylallyl diphosphate (DMAPP). Acts in the terminal step of the DOXP/MEP pathway for isoprenoid precursor biosynthesis. The polypeptide is 4-hydroxy-3-methylbut-2-enyl diphosphate reductase (Xanthomonas oryzae pv. oryzae (strain MAFF 311018)).